The chain runs to 401 residues: Argininosuccinate synthase (401 aa).

8–16 serves as a coordination point for ATP; sequence AYSGGLDTS. Tyr87 provides a ligand contact to L-citrulline. Residue Gly117 participates in ATP binding. Residues Thr119, Asn123, and Asp124 each coordinate L-aspartate. Residue Asn123 coordinates L-citrulline. Positions 127, 175, 259, and 271 each coordinate L-citrulline.

It belongs to the argininosuccinate synthase family. Type 1 subfamily. Homotetramer.

It localises to the cytoplasm. The enzyme catalyses L-citrulline + L-aspartate + ATP = 2-(N(omega)-L-arginino)succinate + AMP + diphosphate + H(+). The protein operates within amino-acid biosynthesis; L-arginine biosynthesis; L-arginine from L-ornithine and carbamoyl phosphate: step 2/3. The protein is Argininosuccinate synthase of Pseudarthrobacter chlorophenolicus (strain ATCC 700700 / DSM 12829 / CIP 107037 / JCM 12360 / KCTC 9906 / NCIMB 13794 / A6) (Arthrobacter chlorophenolicus).